Here is a 681-residue protein sequence, read N- to C-terminus: Transcriptional regulator prz1 (681 aa).

Residues 1 to 15 show a composition bias toward basic and acidic residues; the sequence is MERQRSEEANRRFKD. Disordered stretches follow at residues 1–29, 66–96, 340–372, 410–433, and 520–563; these read MERQ…SKPD, NPSK…DSYP, SHQS…NSPF, PQIN…ANPL, and KIEN…AKSE. Polar residues-rich tracts occupy residues 66–86 and 340–358; these read NPSK…FKTS and SHQS…LNSE. The span at 416-428 shows a compositional bias: low complexity; it reads PSSPSKSQSGPSL. The span at 528–549 shows a compositional bias: polar residues; sequence SNDYLSVRNTRPRSRSLNSLVG. Phosphoserine occurs at positions 543 and 546. Low complexity predominate over residues 550 to 559; the sequence is NKSENSSSSK. C2H2-type zinc fingers lie at residues 570–594 and 600–622; these read YVCT…MNTH and FQCS…EQLH. The C2H2-type 3; degenerate zinc-finger motif lies at 628 to 650; the sequence is FACVTCNQRFARMDALNRHYKSE. Residues 662–681 are disordered; it reads RGIQVPPSRKTAVASTSKQK.

The protein belongs to the EGR C2H2-type zinc-finger protein family. Phosphorylated. Dephosphorylated by calcineurin which leads to rapid translocation from the cytoplasm to the nucleus.

The protein localises to the nucleus. The protein resides in the cytoplasm. Its function is as follows. Involved in the regulation of calcium ion homeostasis. Binds to the calcineurin-dependent response element. Transcriptionally regulates pmc1. This is Transcriptional regulator prz1 (prz1) from Schizosaccharomyces pombe (strain 972 / ATCC 24843) (Fission yeast).